Reading from the N-terminus, the 573-residue chain is Sulfite reductase [NADPH] hemoprotein beta-component (573 aa).

4 residues coordinate [4Fe-4S] cluster: C438, C444, C483, and C487. C487 is a binding site for siroheme.

This sequence belongs to the nitrite and sulfite reductase 4Fe-4S domain family. In terms of assembly, alpha(8)-beta(8). The alpha component is a flavoprotein, the beta component is a hemoprotein. It depends on siroheme as a cofactor. Requires [4Fe-4S] cluster as cofactor.

The enzyme catalyses hydrogen sulfide + 3 NADP(+) + 3 H2O = sulfite + 3 NADPH + 4 H(+). It participates in sulfur metabolism; hydrogen sulfide biosynthesis; hydrogen sulfide from sulfite (NADPH route): step 1/1. Its function is as follows. Component of the sulfite reductase complex that catalyzes the 6-electron reduction of sulfite to sulfide. This is one of several activities required for the biosynthesis of L-cysteine from sulfate. This is Sulfite reductase [NADPH] hemoprotein beta-component from Nitrosomonas europaea (strain ATCC 19718 / CIP 103999 / KCTC 2705 / NBRC 14298).